Here is a 92-residue protein sequence, read N- to C-terminus: PqqA binding protein (92 aa).

It belongs to the PqqD family. Monomer. Interacts with PqqE.

Its pathway is cofactor biosynthesis; pyrroloquinoline quinone biosynthesis. Functions as a PqqA binding protein and presents PqqA to PqqE, in the pyrroloquinoline quinone (PQQ) biosynthetic pathway. The sequence is that of PqqA binding protein from Azotobacter vinelandii (strain DJ / ATCC BAA-1303).